A 150-amino-acid polypeptide reads, in one-letter code: Male-specific protein scotti (150 aa).

The tract at residues 60 to 84 (PPMAVFPARGGPNGGPPRLRKKRSF) is disordered. Asn131 carries N-linked (GlcNAc...) asparagine glycosylation.

Belongs to the male-specific scotti family.

Post-meiotically transcribed gene that has a role in late spermiogenesis; required for actin cone progression during spermatid individualization. In Drosophila yakuba (Fruit fly), this protein is Male-specific protein scotti.